Here is a 678-residue protein sequence, read N- to C-terminus: UvrABC system protein C (678 aa).

Positions Met1–Phe13 are enriched in basic residues. Residues Met1–Ser25 are disordered. A GIY-YIG domain is found at His69–Val147. A UVR domain is found at Gln257–Ile292.

Belongs to the UvrC family. As to quaternary structure, interacts with UvrB in an incision complex.

The protein resides in the cytoplasm. Its function is as follows. The UvrABC repair system catalyzes the recognition and processing of DNA lesions. UvrC both incises the 5' and 3' sides of the lesion. The N-terminal half is responsible for the 3' incision and the C-terminal half is responsible for the 5' incision. The polypeptide is UvrABC system protein C (Bartonella quintana (strain Toulouse) (Rochalimaea quintana)).